Here is a 210-residue protein sequence, read N- to C-terminus: Keratin-associated protein 4-9 (210 aa).

28 consecutive repeat copies span residues 24–28, 29–33, 34–38, 39–43, 44–48, 49–53, 54–58, 59–63, 69–73, 74–78, 84–88, 89–93, 94–98, 99–103, 104–108, 109–113, 114–118, 119–123, 124–128, 129–133, 134–138, 139–143, 144–148, 149–153, 159–163, 164–168, 169–173, and 174–178. Residues 24 to 178 form a 29 X 5 AA repeats of C-C-[RQVHIEK]-[SPTR]-[VSTQCRNP] region; it reads CCRPSCCETT…CCRPCCCVRP (155 aa).

Belongs to the KRTAP type 4 family. As to quaternary structure, interacts with hair keratins. In terms of tissue distribution, expressed in the hair follicles.

Its function is as follows. In the hair cortex, hair keratin intermediate filaments are embedded in an interfilamentous matrix, consisting of hair keratin-associated proteins (KRTAP), which are essential for the formation of a rigid and resistant hair shaft through their extensive disulfide bond cross-linking with abundant cysteine residues of hair keratins. The matrix proteins include the high-sulfur and high-glycine-tyrosine keratins. The chain is Keratin-associated protein 4-9 (KRTAP4-9) from Homo sapiens (Human).